Here is a 366-residue protein sequence, read N- to C-terminus: Isocitrate dehydrogenase [NAD] subunit alpha, mitochondrial (366 aa).

The N-terminal 27 residues, 1–27 (MAGPAWISKVSRLLGAFHNQKQVTRGF), are a transit peptide targeting the mitochondrion. N6-succinyllysine is present on Lys77. Thr101 carries the phosphothreonine modification. Positions 115, 125, and 146 each coordinate substrate. The residue at position 223 (Lys223) is an N6-acetyllysine. Mg(2+)-binding residues include Asp233, Asp257, and Asp261. Lys343 carries the post-translational modification N6-acetyllysine; alternate. Lys343 carries the N6-succinyllysine; alternate modification. Lys350 is modified (N6-succinyllysine).

Belongs to the isocitrate and isopropylmalate dehydrogenases family. As to quaternary structure, heterooligomer of subunits alpha (IDH3A), beta (IDH3B), and gamma (IDH3G) in the apparent ratio of 2:1:1. The heterodimer containing one IDH3A and one IDH3B subunit and the heterodimer containing one IDH3A and one IDH3G subunit assemble into a heterotetramer (which contains two subunits of IDH3A, one of IDH3B and one of IDH3G) and further into the heterooctamer. The cofactor is Mg(2+). Mn(2+) is required as a cofactor.

The protein localises to the mitochondrion. It catalyses the reaction D-threo-isocitrate + NAD(+) = 2-oxoglutarate + CO2 + NADH. Its activity is regulated as follows. The heterotetramer and the heterodimer composed of IDH3A and IDH3G subunits can be allosterically activated by citrate (CIT) or/and ADP, and the two activators can act independently or synergistically. The heterodimer composed of IDH3A and IDH3B subunits cannot be allosterically regulated and the allosteric regulation of the heterotetramer is through the IDH3G subunit and not the IDH3B subunit. The IDH3G subunit contains the allosteric site which consists of a CIT-binding site and an ADP-binding site, and the binding of CIT and ADP causes conformational changes at the allosteric site which are transmitted to the active site in the catalytic subunit (IDH3A) through a cascade of conformational changes at the heterodimer interface, leading to stabilization of the isocitrate-binding at the active site and thus activation of the enzyme. ATP can activate the heterotetramer and the heterodimer composed of IDH3A and IDH3G subunits at low concentrations but inhibits their activities at high concentrations, whereas ATP exhibits only inhibitory effect on the heterodimer composed of IDH3A and IDH3B subunits. Catalytic subunit of the enzyme which catalyzes the decarboxylation of isocitrate (ICT) into alpha-ketoglutarate. The heterodimer composed of the alpha (IDH3A) and beta (IDH3B) subunits and the heterodimer composed of the alpha (IDH3A) and gamma (IDH3G) subunits, have considerable basal activity but the full activity of the heterotetramer (containing two subunits of IDH3A, one of IDH3B and one of IDH3G) requires the assembly and cooperative function of both heterodimers. This Bos taurus (Bovine) protein is Isocitrate dehydrogenase [NAD] subunit alpha, mitochondrial.